We begin with the raw amino-acid sequence, 376 residues long: Chaperone protein DnaJ (376 aa).

The 67-residue stretch at 4–70 folds into the J domain; the sequence is DYYQILGVSK…QKRAAYDRFG (67 aa). The segment at 139-217 adopts a CR-type zinc-finger fold; it reads GVEKNISFSS…CHGLGRYHKQ (79 aa). The Zn(2+) site is built by Cys152, Cys155, Cys169, Cys172, Cys191, Cys194, Cys205, and Cys208. 4 CXXCXGXG motif repeats span residues 152–159, 169–176, 191–198, and 205–212; these read CDTCHGSG, CDACGGVG, CHKCQGNG, and CKKCHGLG.

Belongs to the DnaJ family. Homodimer. It depends on Zn(2+) as a cofactor.

It is found in the cytoplasm. In terms of biological role, participates actively in the response to hyperosmotic and heat shock by preventing the aggregation of stress-denatured proteins and by disaggregating proteins, also in an autonomous, DnaK-independent fashion. Unfolded proteins bind initially to DnaJ; upon interaction with the DnaJ-bound protein, DnaK hydrolyzes its bound ATP, resulting in the formation of a stable complex. GrpE releases ADP from DnaK; ATP binding to DnaK triggers the release of the substrate protein, thus completing the reaction cycle. Several rounds of ATP-dependent interactions between DnaJ, DnaK and GrpE are required for fully efficient folding. Also involved, together with DnaK and GrpE, in the DNA replication of plasmids through activation of initiation proteins. The sequence is that of Chaperone protein DnaJ from Rickettsia bellii (strain RML369-C).